The sequence spans 151 residues: ALK and LTK ligand 2 (151 aa).

A signal peptide spans 1–25 (MRVSGRPMLLALLLLLSTVGDRGRA). 2 disulfide bridges follow: cysteine 112–cysteine 148 and cysteine 126–cysteine 135.

This sequence belongs to the ALKAL family. As to quaternary structure, homodimer.

The protein resides in the secreted. It localises to the cell membrane. Its function is as follows. Cytokine that acts as a physiological ligand for receptor tyrosine kinases LTK and ALK, leading to their activation. Cytokine-binding is sufficient to activate LTK. In contrast, ALKAL2-driven activation of ALK is coupled with heparin-binding to ALK. Stimulation of ALK signaling is involved in neural development and regulation of energy expenditure. This chain is ALK and LTK ligand 2, found in Mus musculus (Mouse).